Reading from the N-terminus, the 435-residue chain is NADH-quinone oxidoreductase subunit D (435 aa).

It belongs to the complex I 49 kDa subunit family. As to quaternary structure, NDH-1 is composed of 14 different subunits. Subunits NuoB, C, D, E, F, and G constitute the peripheral sector of the complex.

The protein localises to the cell inner membrane. The enzyme catalyses a quinone + NADH + 5 H(+)(in) = a quinol + NAD(+) + 4 H(+)(out). Functionally, NDH-1 shuttles electrons from NADH, via FMN and iron-sulfur (Fe-S) centers, to quinones in the respiratory chain. The immediate electron acceptor for the enzyme in this species is believed to be ubiquinone. Couples the redox reaction to proton translocation (for every two electrons transferred, four hydrogen ions are translocated across the cytoplasmic membrane), and thus conserves the redox energy in a proton gradient. The protein is NADH-quinone oxidoreductase subunit D of Xanthomonas campestris pv. campestris (strain 8004).